We begin with the raw amino-acid sequence, 126 residues long: Protein ApaG (126 aa).

The region spanning 2–126 (SALDDSIRVE…FRLALPGLLH (125 aa)) is the ApaG domain.

The sequence is that of Protein ApaG from Shewanella sp. (strain ANA-3).